Consider the following 366-residue polypeptide: MRVLAAMSGGVDSAVAAARAVAAGHDVVGVHLALSQDPQTVRESSRGCCSLEDSADARRVCDKLGIPFYVWDFSDRFKEDVIDDFISSYEAGETPNPCLRCNEKIKFAALLERGIALGFDAVVTGHYARLTQPVDGGDGYLRRSIDPDKDQSYVLGVLGAHEIAHCMFPVGDTVKPKIREEAAAMGFSVAKKPDSYDICFIPDGNTQAFLGRHIGLRPGMIVDSDGNELKEHDGAWNYTIGQRKGLDIKQPAADGKPRYVTNIDAATGTVTVGSRENLKVIALTADRLKYLHPAMTGSFEAEVQVRAHGSVVACSVMVNESDDTMRVELHTPLSGVARGQAAVIYLPDDDGDIVLGSGTICATEHQ.

Residues 6–13 (AMSGGVDS) and Leu-32 contribute to the ATP site. Catalysis depends on Cys-101, which acts as the Nucleophile. A disulfide bridge connects residues Cys-101 and Cys-199. Gly-125 serves as a coordination point for ATP. The interaction with tRNA stretch occupies residues 149–151 (KDQ). Residue Cys-199 is the Cysteine persulfide intermediate of the active site.

It belongs to the MnmA/TRMU family.

The protein resides in the cytoplasm. It catalyses the reaction S-sulfanyl-L-cysteinyl-[protein] + uridine(34) in tRNA + AH2 + ATP = 2-thiouridine(34) in tRNA + L-cysteinyl-[protein] + A + AMP + diphosphate + H(+). Its function is as follows. Catalyzes the 2-thiolation of uridine at the wobble position (U34) of tRNA, leading to the formation of s(2)U34. The chain is tRNA-specific 2-thiouridylase MnmA from Corynebacterium diphtheriae (strain ATCC 700971 / NCTC 13129 / Biotype gravis).